The following is a 591-amino-acid chain: PDZ and LIM domain protein 5 (591 aa).

N-acetylserine is present on S2. S2 bears the Phosphoserine mark. The region spanning 2–85 (SNYNVSLVGP…SLNMTLQRAS (84 aa)) is the PDZ domain. At K89 the chain carries N6-acetyllysine; alternate. The residue at position 89 (K89) is an N6-succinyllysine; alternate. K89 is covalently cross-linked (Glycyl lysine isopeptide (Lys-Gly) (interchain with G-Cter in SUMO2); alternate). 3 positions are modified to phosphoserine: S111, S134, and S137. 2 disordered regions span residues 125-240 (YNKV…GPPR) and 255-334 (THSD…SNRP). Positions 134-143 (SVSSPKVTSI) are enriched in polar residues. Positions 144-161 (PSPSSAFTPAHAATSSHA) are enriched in low complexity. Residues 162–174 (SPPPVAAVTPPPL) show a composition bias toward pro residues. Composition is skewed to polar residues over residues 183–195 (ANPS…SPPN) and 207–217 (PTVTSVCSESA). A phosphoserine mark is found at S228 and S260. 2 stretches are compositionally biased toward basic and acidic residues: residues 258 to 273 (DASK…DWRP) and 293 to 304 (EHLKESENDNAK). The span at 310–329 (PEPSQQSASPLSAAESLESP) shows a compositional bias: low complexity. Residues S313 and S318 each carry the phosphoserine modification. K346 bears the N6-acetyllysine mark. The disordered stretch occupies residues 348–398 (VGSTSVKSPSWQRPNQAAPSTGRISNSASSSGTGAPMKPAVGPPQPSDQDT). Over residues 349-380 (GSTSVKSPSWQRPNQAAPSTGRISNSASSSGT) the composition is skewed to polar residues. Residues S355 and S357 each carry the phosphoserine modification. LIM zinc-binding domains lie at 413 to 472 (PMCA…FFAP), 472 to 531 (PECG…LFGT), and 531 to 591 (TICR…SVNF).

Interacts with various PKC isoforms through the LIM domains. Interacts with actin and alpha-actinin through the PDZ domain. Interacts (via LIM domains) with SIPA1L1/SPAR; this interaction may occur preferentially with isoform 1. In terms of tissue distribution, detected in brain, in neurons, including in hippocampal neurons, and glial cells (at protein level). Detected in heart and skeletal muscle.

It localises to the postsynaptic density. The protein resides in the presynapse. Its subcellular location is the postsynapse. It is found in the cytoplasm. The protein localises to the cytosol. Functionally, may play an important role in the heart development by scaffolding PKC to the Z-disk region. May play a role in the regulation of cardiomyocyte expansion. Isoforms lacking the LIM domains may negatively modulate the scaffolding activity of isoform 1. Overexpression promotes the development of heart hypertrophy. Contributes to the regulation of dendritic spine morphogenesis in neurons. May be required to restrain postsynaptic growth of excitatory synapses. Isoform 1, but not isoform 2, expression favors spine thinning and elongation. This chain is PDZ and LIM domain protein 5 (Pdlim5), found in Rattus norvegicus (Rat).